Reading from the N-terminus, the 84-residue chain is Small ribosomal subunit protein eS27 (84 aa).

The span at Met-1 to Lys-16 shows a compositional bias: basic and acidic residues. The segment at Met-1 to Arg-23 is disordered. A C4-type zinc finger spans residues Cys-37–Cys-59.

The protein belongs to the eukaryotic ribosomal protein eS27 family. As to quaternary structure, component of the small ribosomal subunit. Part of the small subunit (SSU) processome, composed of more than 70 proteins and the RNA chaperone small nucleolar RNA (snoRNA) U3. It depends on Zn(2+) as a cofactor.

Its subcellular location is the cytoplasm. The protein localises to the nucleus. It is found in the nucleolus. Its function is as follows. Component of the small ribosomal subunit. The ribosome is a large ribonucleoprotein complex responsible for the synthesis of proteins in the cell. Required for proper rRNA processing and maturation of 18S rRNAs. Part of the small subunit (SSU) processome, first precursor of the small eukaryotic ribosomal subunit. During the assembly of the SSU processome in the nucleolus, many ribosome biogenesis factors, an RNA chaperone and ribosomal proteins associate with the nascent pre-rRNA and work in concert to generate RNA folding, modifications, rearrangements and cleavage as well as targeted degradation of pre-ribosomal RNA by the RNA exosome. The sequence is that of Small ribosomal subunit protein eS27 (rps27) from Xenopus laevis (African clawed frog).